A 230-amino-acid polypeptide reads, in one-letter code: Ribose-5-phosphate isomerase A (230 aa).

Residues 29–32 (TGST), 85–88 (DGAD), and 98–101 (KGGG) contribute to the substrate site. Glu107 serves as the catalytic Proton acceptor. Lys125 contributes to the substrate binding site.

Belongs to the ribose 5-phosphate isomerase family. As to quaternary structure, homodimer.

The enzyme catalyses aldehydo-D-ribose 5-phosphate = D-ribulose 5-phosphate. The protein operates within carbohydrate degradation; pentose phosphate pathway; D-ribose 5-phosphate from D-ribulose 5-phosphate (non-oxidative stage): step 1/1. Its function is as follows. Catalyzes the reversible conversion of ribose-5-phosphate to ribulose 5-phosphate. The sequence is that of Ribose-5-phosphate isomerase A from Staphylococcus haemolyticus (strain JCSC1435).